The chain runs to 70 residues: Basic phospholipase A2 2 (70 aa).

Cys-28 and Cys-44 are disulfide-bonded. Residue His-47 is part of the active site. Asp-48 serves as a coordination point for Ca(2+).

The protein belongs to the phospholipase A2 family. Group II subfamily. D49 sub-subfamily. Requires Ca(2+) as cofactor. In terms of tissue distribution, expressed by the venom gland.

It localises to the secreted. It carries out the reaction a 1,2-diacyl-sn-glycero-3-phosphocholine + H2O = a 1-acyl-sn-glycero-3-phosphocholine + a fatty acid + H(+). Functionally, snake venom phospholipase A2 (PLA2) that exhibits strong myotoxicity. PLA2 catalyzes the calcium-dependent hydrolysis of the 2-acyl groups in 3-sn-phosphoglycerides. The polypeptide is Basic phospholipase A2 2 (Trimeresurus stejnegeri (Chinese green tree viper)).